A 149-amino-acid polypeptide reads, in one-letter code: Arginine repressor (149 aa).

Belongs to the ArgR family.

It localises to the cytoplasm. It functions in the pathway amino-acid biosynthesis; L-arginine biosynthesis [regulation]. In terms of biological role, regulates arginine biosynthesis genes. The polypeptide is Arginine repressor (Listeria monocytogenes serotype 4b (strain F2365)).